A 606-amino-acid chain; its full sequence is Envelope glycoprotein gp95 (606 aa).

A signal peptide spans 1–62; sequence MEAVIKAFLT…VLCEVTGVRA (62 aa). The Extracellular segment spans residues 63–552; sequence DVHLLEQPGN…EWAVHLLKGL (490 aa). Asn79, Asn120, Asn141, Asn158, and Asn178 each carry an N-linked (GlcNAc...) asparagine; by host glycan. Disulfide bonds link Cys87-Cys499, Cys121-Cys152, Cys192-Cys245, Cys258-Cys267, Cys353-Cys370, Cys410-Cys446, and Cys491-Cys498. Positions 185–226 are binding to host receptor; that stretch reads ISGITGGCVGFRPQGVPWYLGWSRQEATRFLLRHPSFSKSTE. An N-linked (GlcNAc...) asparagine; by host glycan is attached at Asn257. Residues 261–288 are binding to host receptor; sequence VGRQYRCGNARSPRPGLPEIQCTRRGGK. N-linked (GlcNAc...) asparagine; by host glycosylation is found at Asn291, Asn297, Asn307, and Asn315. Residue Asn391 is glycosylated (N-linked (GlcNAc...) asparagine; by host). The tract at residues 418–438 is fusion peptide; it reads GPTARIFASILAPGVARAQAL. Positions 435–485 form a coiled coil; the sequence is AQALREIERLACWSVKQANLTTSFLGDLLDDVTSIRHAVLQNRAAIDFLLL. A glycan (N-linked (GlcNAc...) asparagine; by host) is linked at Asn453. The interval 474 to 490 is immunosuppression; that stretch reads LQNRAAIDFLLLAHGHG. An N-linked (GlcNAc...) asparagine; by host glycan is attached at Asn501. A coiled-coil region spans residues 503–533; that stretch reads SDHSESIQKKFQLMKEHVNKIGVDSDPIGSW. The helical transmembrane segment at 553–573 threads the bilayer; that stretch reads LLGLVVILLLVVCLPCLLQIV. S-palmitoyl cysteine; by host attachment occurs at residues Cys565 and Cys568. Topologically, residues 574 to 606 are cytoplasmic; it reads CGNIRKMINNSISYHTEYKKLQKACGQPESRIV.

It belongs to the Alpharetroviruses envelope glycoprotein family. Heterodimer with the transmembrane protein. The mature envelope protein (Env) consists of a trimer of SU-TM heterodimers attached by a labile interchain disulfide bond. Interacts with the host cell entry receptor TVA isoforms pg900 and pg800; this interaction allows the viral attachment. In terms of assembly, heterodimer with the surface protein. The mature envelope protein (Env) consists of a trimer of SU-TM heterodimers attached by a labile interchain disulfide bond. In terms of processing, specific enzymatic cleavages in vivo yield mature proteins. Envelope glycoproteins are synthesized as an inactive precursor that is N-glycosylated and processed likely by host cell furin or by a furin-like protease in the Golgi to yield the mature SU and TM proteins. The cleavage site between SU and TM requires the minimal sequence [KR]-X-[KR]-R. The transmembrane protein is palmitoylated. Palmitoylation is necessary for glycoprotein function and infectivity.

Its subcellular location is the virion membrane. It localises to the host cell membrane. The surface protein (SU) attaches the virus to the host cell entry receptor TVA. This interaction triggers the refolding of the transmembrane protein (TM) thereby unmasking its fusion peptide and the formation of a reactive thiolate on Cys-100 to activate its fusogenic potential. Fusion occurs at the host cell plasma membrane. Its function is as follows. The transmembrane protein (TM) acts as a class I viral fusion protein. Under the current model, the protein has at least 3 conformational states: pre-fusion native state, pre-hairpin intermediate state, and post-fusion hairpin state. During viral and target cell membrane fusion, the coiled coil regions (heptad repeats) assume a trimer-of-hairpins structure, positioning the fusion peptide in close proximity to the C-terminal region of the ectodomain. The formation of this structure appears to drive apposition and subsequent fusion of viral and target cell membranes. Membranes fusion leads to delivery of the nucleocapsid into the cytoplasm. The polypeptide is Envelope glycoprotein gp95 (env) (Avian leukosis virus subgroup A (isolate RSA) (ALV-A RSA)).